We begin with the raw amino-acid sequence, 357 residues long: U5 small nuclear ribonucleoprotein 40 kDa protein (357 aa).

Lys-18 is covalently cross-linked (Glycyl lysine isopeptide (Lys-Gly) (interchain with G-Cter in SUMO2)). Arg-21 is modified (asymmetric dimethylarginine). WD repeat units follow at residues 64-103 (GHEG…DNYA), 107-146 (GHSG…RVKR), 149-189 (GHTS…AIQT), 191-230 (QNTY…LTYT), 233-272 (GHAD…PKER), 283-322 (NFEK…ILYK), and 325-357 (GHAG…GEIQ). A Glycyl lysine isopeptide (Lys-Gly) (interchain with G-Cter in SUMO2) cross-link involves residue Lys-270.

As to quaternary structure, component of the pre-catalytic and catalytic spliceosome complexes. Component of the postcatalytic spliceosome P complex. Part of the U5 snRNP complex. Interacts with PRPF8. Component of the U4/U6-U5 tri-snRNP complex composed of the U4, U6 and U5 snRNAs and at least PRPF3, PRPF4, PRPF6, PRPF8, PRPF31, SNRNP200, TXNL4A, WDR57, SNRNP40, DDX23, CD2BP2, PPIH, SNU13, EFTUD2, SART1 and USP39. Component of the minor spliceosome, which splices U12-type introns.

The protein localises to the nucleus. Its function is as follows. Required for pre-mRNA splicing as component of the activated spliceosome. Component of the U5 small nuclear ribonucleoprotein (snRNP) complex and the U4/U6-U5 tri-snRNP complex, building blocks of the spliceosome. As a component of the minor spliceosome, involved in the splicing of U12-type introns in pre-mRNAs. The polypeptide is U5 small nuclear ribonucleoprotein 40 kDa protein (SNRNP40) (Homo sapiens (Human)).